Reading from the N-terminus, the 276-residue chain is Diaminopimelate epimerase (276 aa).

3 residues coordinate substrate: Asn-13, Gln-46, and Asn-66. Cys-75 functions as the Proton donor in the catalytic mechanism. Residues 76-77, Asn-159, Asn-192, and 210-211 each bind substrate; these read GN and ER. The active-site Proton acceptor is the Cys-219. Substrate is bound at residue 220–221; that stretch reads GT.

This sequence belongs to the diaminopimelate epimerase family. As to quaternary structure, homodimer.

The protein resides in the cytoplasm. The enzyme catalyses (2S,6S)-2,6-diaminopimelate = meso-2,6-diaminopimelate. Its pathway is amino-acid biosynthesis; L-lysine biosynthesis via DAP pathway; DL-2,6-diaminopimelate from LL-2,6-diaminopimelate: step 1/1. Catalyzes the stereoinversion of LL-2,6-diaminopimelate (L,L-DAP) to meso-diaminopimelate (meso-DAP), a precursor of L-lysine and an essential component of the bacterial peptidoglycan. In Aeromonas hydrophila subsp. hydrophila (strain ATCC 7966 / DSM 30187 / BCRC 13018 / CCUG 14551 / JCM 1027 / KCTC 2358 / NCIMB 9240 / NCTC 8049), this protein is Diaminopimelate epimerase.